The following is a 1187-amino-acid chain: MEEDEDQFLLSSLGVTSANPEDLEQKILDEATKKPDNDEGGSVEEKSTQLEGTNLLSSSQNELLNKLRAVKFEIDAVASTVENVDEIAAEKGLKKDDESDLQGLHSGSALQHALATDRLRSLKKRKIQLEKELTGLHGQSASSSADHGNLLRDLVKEKPSLKRKLKEIRKPSRRDGKKVKVVSFREDTDFDAVFDGASAGFVETERDELVRKGILTPFHKLDGFERRLQQPGPSNSRNLPEGDDENEDSSIIDRAVQSMSLAAKARPTTKLLDAEDLPKLEPPTAPFRRLRKLYKTPNSPDNEAKKRKAGKKSKKTRPLPEKKWRKRISREDSSLQGSGDGRRILTTSSCEEEELDDFDDADDNERSSVQLEGGLNIPECIFRKLFDYQRVGVQWLWELHCQRAGGIIGDEMGLGKTIQVLSFLGSLHFSKMYKPSIIICPVTLLRQWRREAQKWYPDFHVEILHDSAQDSGHGKGQGKASESDYDSESSVDSDHEPKSKNTKKWDSLLNRVLNSESGLLITTYEQLRLQGEKLLNIEWGYAVLDEGHRIRNPNSDITLVCKQLQTVHRIIMTGAPIQNKLTELWSLFDFVFPGKLGVLPVFEAEFSVPITVGGYANASPLQVSTAYRCAVVLRDLIMPYLLRRMKADVNAHLTKKTEHVLFCSLTVEQRSTYRAFLASSEVEQIFDGNRNSLYGIDVMRKICNHPDLLEREHSHQNPDYGNPERSGKMKVVAEVLKVWKQQGHRVLLFSQTQQMLDILESFLVANEYSYRRMDGLTPVKQRMALIDEFNNSEDMFVFVLTTKVGGLGTNLTGANRVIIFDPDWNPSNDMQARERAWRIGQKKDVTVYRLITRGTIEEKVYHRQIYKHFLTNKILKNPQQRRFFKARDMKDLFILKDDGDSNASTETSNIFSQLAEEINIVGVQSDKKPESDTQLALHKTAEGSSEQTDVEMTDKTGEAMDEETNILKSLFDAHGIHSAVNHDAIMNANDEEEKMRLEHQASQVAQRAAEALRQSRMLRSRESISVPTWTGRSGCAGAPSSVRRRFGSTVNSRLTQTGDKPSAIKNGISAGLSSGKAPSSAELLNRIRGSREQAIGVGLEQPQSSFPSSSGSSSRVGSLQPEVLIRKICSFVQQKGGSADTTSIVNHFRDIVSFNDKQLFKNLLKEIATLEKDQNRSFWVLKSEYKD.

Residues 1–55 (MEEDEDQFLLSSLGVTSANPEDLEQKILDEATKKPDNDEGGSVEEKSTQLEGTNL) are disordered. The segment covering 9–19 (LLSSLGVTSAN) has biased composition (polar residues). Positions 23–48 (LEQKILDEATKKPDNDEGGSVEEKST) are enriched in basic and acidic residues. A coiled-coil region spans residues 110-170 (LQHALATDRL…LKRKLKEIRK (61 aa)). The short motif at 162 to 169 (KRKLKEIR) is the Nuclear localization signal 1 element. Disordered regions lie at residues 223–247 (GFER…DENE) and 273–343 (DAED…DGRR). 2 consecutive short sequence motifs (nuclear localization signal) follow at residues 290 to 297 (LRKLYKTP) and 310 to 317 (GKKSKKTR). Positions 305 to 328 (KKRKAGKKSKKTRPLPEKKWRKRI) are enriched in basic residues. One can recognise a Helicase ATP-binding domain in the interval 397 to 594 (WELHCQRAGG…WSLFDFVFPG (198 aa)). 410–417 (DEMGLGKT) contributes to the ATP binding site. A disordered region spans residues 467 to 501 (SAQDSGHGKGQGKASESDYDSESSVDSDHEPKSKN). Basic and acidic residues predominate over residues 492-501 (DSDHEPKSKN). A DEGH box motif is present at residues 545 to 548 (DEGH). Residues 730–890 (KVVAEVLKVW…RRFFKARDMK (161 aa)) enclose the Helicase C-terminal domain. The stretch at 987–1016 (NANDEEEKMRLEHQASQVAQRAAEALRQSR) forms a coiled coil. Over residues 1050–1059 (VNSRLTQTGD) the composition is skewed to polar residues. The disordered stretch occupies residues 1050–1075 (VNSRLTQTGDKPSAIKNGISAGLSSG).

The protein belongs to the SNF2/RAD54 helicase family. As to quaternary structure, homodimer. Binds DNA.

It localises to the nucleus. Functionally, essential factor involved in transcription-coupled nucleotide excision repair (TCR) which allows RNA polymerase II-blocking lesions to be rapidly removed from the transcribed strand of active genes. Upon DNA-binding, it locally modifies DNA conformation by wrapping the DNA around itself, thereby modifying the interface between stalled RNA polymerase II and DNA. It is required for transcription-coupled repair complex formation. The chain is Protein CHROMATIN REMODELING 8 from Arabidopsis thaliana (Mouse-ear cress).